The following is a 1092-amino-acid chain: MTNTKYYPEVSSNADFAGLEREILKFWQDNNIFQKSIDDRNGESEFIFYDGPPFANGLPHYGHLLTGFIKDVYARYQTVKGKKVERRFGWDCHGLPAEMQSEKELGISGRLAIANFGIEKFNAHCRASVMKYANDWEEYVTRQARWVDFKNSYKTMDKNFMESVLWAFKELYNKGLLYESMRVMPYSWACETPLSNFETRLDNSYRERADKAVTVSFVLSHPVATTTGSFKEYRILAWTTTPWTLPSNLALAVGSDIDYALVPKNDVCYIIAAYSVSKYAKELGLSGEENFEIIKGSELQGLHYKSLFDYFENHPNSFKIFAGDFVVEGDGTGVVHMAPGFGEDDQILCESKGIELVCPVDNSGKFTKEIPNLEGLQVFDANDKIIIKLKEQGNWLKTEQYIHNYPHCWRTDTPLIYKAVPSWYVKVTQFKDRMVELNQQINWIPFHVKDNLFGKWLENARDWSISRNRFWGTPLPVWKSDDPKYPRIDVYGSIEELEKDFGVKVTDLHRPFIDELTRPNPDDPTGKSTMRRIEDVFDCWFESGSMPYGQAHYPFENKEWFEDHFPADFIVEYSAQTRGWFYTLMVLSTALFDRPPFLNCICHGVILDSTGQKLSKRLNNYADPLELFDKYGSDALRVTMLSSNVVKGQELLIDKDGKMVFDTLRLFIKPIWNAYHFFTMYANADSLKGKLNFSSKNVLDVYILSKLKIAVQKIEESLDNFDTQTAYHAVSEFFEVLNNWYIRRSRARFWKSEKDTDKQNAYNTLYSCLDTMAIAMSALVPMISEAIYKGLRHCEERNDTALSGKSNVIARQDTSLDKAISGVSHKIATALSVPRNDAISVHLCNYPTLSDFEINHELVATMDNVLDICSNSLFIRSTENIRVRQPLASIAIISKHNNNLKDFEDLIKDEINVKAVIYRDDLENYTSKKLSINFPMLGKRLPHKMKEIIVASKKGEWEAITGGLAICGETLNSDEYKLVLEPYSHIKGAASFENNSSLLILDLELTPELIEEGYARDIVRFIQQARKDADFSITDRILIEIISEFNLSKIIDNYGDFIKEQTLGEFAKNFTPDYVSKVELENYQIQLKVKKS.

A 'HIGH' region motif is present at residues 53-63 (PFANGLPHYGH). The 'KMSKS' region signature appears at 613–617 (KLSKR). Position 616 (Lys616) interacts with ATP.

Belongs to the class-I aminoacyl-tRNA synthetase family. IleS type 2 subfamily. In terms of assembly, monomer. Zn(2+) is required as a cofactor.

It is found in the cytoplasm. It carries out the reaction tRNA(Ile) + L-isoleucine + ATP = L-isoleucyl-tRNA(Ile) + AMP + diphosphate. In terms of biological role, catalyzes the attachment of isoleucine to tRNA(Ile). As IleRS can inadvertently accommodate and process structurally similar amino acids such as valine, to avoid such errors it has two additional distinct tRNA(Ile)-dependent editing activities. One activity is designated as 'pretransfer' editing and involves the hydrolysis of activated Val-AMP. The other activity is designated 'posttransfer' editing and involves deacylation of mischarged Val-tRNA(Ile). The sequence is that of Isoleucine--tRNA ligase from Rickettsia peacockii (strain Rustic).